Reading from the N-terminus, the 819-residue chain is Molybdenum cofactor sulfurase (819 aa).

Lysine 271 is modified (N6-(pyridoxal phosphate)lysine). Residue cysteine 430 is part of the active site. Positions 650–817 (CKLLRYSSST…IGVGEEVNPD (168 aa)) constitute an MOSC domain.

The protein belongs to the class-V pyridoxal-phosphate-dependent aminotransferase family. MOCOS subfamily. Pyridoxal 5'-phosphate serves as cofactor. As to expression, ubiquitously expressed.

It carries out the reaction Mo-molybdopterin + L-cysteine + AH2 = thio-Mo-molybdopterin + L-alanine + A + H2O. It participates in cofactor biosynthesis; molybdopterin biosynthesis. Its function is as follows. Sulfurates the molybdenum cofactor. Sulfation of molybdenum is essential for xanthine dehydrogenase (XDH) and aldehyde oxidase (ADO) enzymes in which molybdenum cofactor is liganded by 1 oxygen and 1 sulfur atom in active form. Modulates cold stress- and osmotic stress-responsive gene expression by acting as key regulator of abscisic acid (ABA) biosynthesis. This Arabidopsis thaliana (Mouse-ear cress) protein is Molybdenum cofactor sulfurase (ABA3).